The following is a 787-amino-acid chain: Pyridoxal-dependent decarboxylase domain-containing protein 1 (787 aa).

The segment covering 29 to 41 has biased composition (basic and acidic residues); the sequence is EDSQRRTEEENGK. Residues 29 to 52 form a disordered region; it reads EDSQRRTEEENGKKLLSGDIPGPL. Ser-653 is modified (phosphoserine). The segment at 683 to 787 is disordered; that stretch reads QGSGVTPPQT…PQVEEPESLR (105 aa). Over residues 685–697 the composition is skewed to polar residues; the sequence is SGVTPPQTPTGTR. Thr-688 and Thr-692 each carry phosphothreonine. Residues Ser-711, Ser-719, and Ser-723 each carry the phosphoserine modification. Positions 735-745 are enriched in polar residues; sequence QSSGGQEASEA. Ser-747 and Ser-785 each carry phosphoserine. Residues 774-787 are compositionally biased toward basic and acidic residues; the sequence is QDDRPQVEEPESLR.

Belongs to the group II decarboxylase family. Pyridoxal 5'-phosphate is required as a cofactor.

The protein is Pyridoxal-dependent decarboxylase domain-containing protein 1 (PDXDC1) of Bos taurus (Bovine).